The sequence spans 277 residues: Eukaryotic translation initiation factor 3 subunit J (277 aa).

The interval 1-80 (MSWDDEDFAV…PAATKNTMLD (80 aa)) is disordered. The segment covering 23–43 (WDDEFAENDDEPVLESWEDEE) has biased composition (acidic residues). Over residues 50-75 (KAAAAAAAKAPKKASPSPAATPAATK) the composition is skewed to low complexity. Residues 199–230 (TVENIRQTIATLNVLMKDKEREERQARLAKVK) are a coiled coil. The disordered stretch occupies residues 257–277 (DNDFDLGGNDNFDDFGEDDFM). The span at 267–277 (NFDDFGEDDFM) shows a compositional bias: acidic residues.

Belongs to the eIF-3 subunit J family. In terms of assembly, component of the eukaryotic translation initiation factor 3 (eIF-3) complex.

The protein resides in the cytoplasm. Functionally, component of the eukaryotic translation initiation factor 3 (eIF-3) complex, which is involved in protein synthesis of a specialized repertoire of mRNAs and, together with other initiation factors, stimulates binding of mRNA and methionyl-tRNAi to the 40S ribosome. The eIF-3 complex specifically targets and initiates translation of a subset of mRNAs involved in cell proliferation. The sequence is that of Eukaryotic translation initiation factor 3 subunit J from Kluyveromyces lactis (strain ATCC 8585 / CBS 2359 / DSM 70799 / NBRC 1267 / NRRL Y-1140 / WM37) (Yeast).